The chain runs to 199 residues: Large ribosomal subunit protein uL18 (199 aa).

Belongs to the universal ribosomal protein uL18 family. As to quaternary structure, part of the 50S ribosomal subunit. Contacts the 5S and 23S rRNAs.

In terms of biological role, this is one of the proteins that bind and probably mediate the attachment of the 5S RNA into the large ribosomal subunit, where it forms part of the central protuberance. The polypeptide is Large ribosomal subunit protein uL18 (Saccharolobus solfataricus (strain ATCC 35092 / DSM 1617 / JCM 11322 / P2) (Sulfolobus solfataricus)).